The sequence spans 163 residues: Nucleotide-binding protein BLi01194 (163 aa).

The protein belongs to the YajQ family.

In terms of biological role, nucleotide-binding protein. The sequence is that of Nucleotide-binding protein BLi01194 from Bacillus licheniformis (strain ATCC 14580 / DSM 13 / JCM 2505 / CCUG 7422 / NBRC 12200 / NCIMB 9375 / NCTC 10341 / NRRL NRS-1264 / Gibson 46).